The following is a 1159-amino-acid chain: Syntaxin-binding protein 5-like (1159 aa).

The segment at Met-1 to Thr-37 is disordered. The segment covering Cys-25–Thr-37 has biased composition (low complexity). WD repeat units lie at residues Thr-67–Gln-108, Val-115–Phe-154, Ile-159–Ile-195, His-214–Ile-248, Ile-254–Pro-286, Pro-307–Thr-350, Ile-358–Leu-392, Thr-414–Lys-491, Gln-519–Val-628, and Thr-642–Gly-703. Disordered regions lie at residues Ser-571 to Asp-604 and Leu-690 to Ser-770. Polar residues-rich tracts occupy residues Gln-699–Ser-713 and Ser-721–Cys-739. WD repeat units follow at residues Val-808 to Val-865, Arg-874 to Leu-946, Ile-951 to Ser-995, and Cys-1009 to Gln-1032. Residues Gly-1094–Lys-1154 form the v-SNARE coiled-coil homology domain.

This sequence belongs to the WD repeat L(2)GL family.

The protein resides in the cytoplasm. Its subcellular location is the cell membrane. It localises to the membrane. Its function is as follows. May play a role in vesicle trafficking and exocytosis. This is Syntaxin-binding protein 5-like (stxbp5l) from Danio rerio (Zebrafish).